Reading from the N-terminus, the 509-residue chain is Cytochrome P450 4A10 (509 aa).

The next 2 helical transmembrane spans lie at 15 to 35 (LSGFLQVASVLGLLLLLVKAV) and 121 to 141 (LLAPWIGYGLLLLNGQPWFQH). Heme is bound at residue glutamate 320. Position 439 is a phosphoserine (serine 439). Residue cysteine 456 participates in heme binding.

The protein belongs to the cytochrome P450 family. It depends on heme as a cofactor. As to expression, highly expressed in the kidneys of both genders.

It localises to the endoplasmic reticulum membrane. Its subcellular location is the microsome membrane. The enzyme catalyses an omega-methyl-long-chain fatty acid + reduced [NADPH--hemoprotein reductase] + O2 = an omega-hydroxy-long-chain fatty acid + oxidized [NADPH--hemoprotein reductase] + H2O + H(+). It catalyses the reaction dodecanoate + reduced [NADPH--hemoprotein reductase] + O2 = 12-hydroxydodecanoate + oxidized [NADPH--hemoprotein reductase] + H2O + H(+). It carries out the reaction dodecanoate + reduced [NADPH--hemoprotein reductase] + O2 = 11-hydroxydodecanoate + oxidized [NADPH--hemoprotein reductase] + H2O + H(+). The catalysed reaction is tetradecanoate + reduced [NADPH--hemoprotein reductase] + O2 = 14-hydroxytetradecanoate + oxidized [NADPH--hemoprotein reductase] + H2O + H(+). The enzyme catalyses hexadecanoate + reduced [NADPH--hemoprotein reductase] + O2 = 16-hydroxyhexadecanoate + oxidized [NADPH--hemoprotein reductase] + H2O + H(+). It catalyses the reaction (9Z)-octadecenoate + reduced [NADPH--hemoprotein reductase] + O2 = 18-hydroxy-(9Z)-octadecenoate + oxidized [NADPH--hemoprotein reductase] + H2O + H(+). It carries out the reaction (9Z,12Z)-octadecadienoate + reduced [NADPH--hemoprotein reductase] + O2 = 18-hydroxy-(9Z,12Z)-octadecadienoate + oxidized [NADPH--hemoprotein reductase] + H2O + H(+). The catalysed reaction is (9Z,12Z)-octadecadienoate + reduced [NADPH--hemoprotein reductase] + O2 = 17-hydroxy-(9Z,12Z)-octadecadienoate + oxidized [NADPH--hemoprotein reductase] + H2O + H(+). The enzyme catalyses (5Z,8Z,11Z,14Z)-eicosatetraenoate + reduced [NADPH--hemoprotein reductase] + O2 = 20-hydroxy-(5Z,8Z,11Z,14Z)-eicosatetraenoate + oxidized [NADPH--hemoprotein reductase] + H2O + H(+). It catalyses the reaction 8,9-epoxy-(5Z,11Z,14Z)-eicosatrienoate + reduced [NADPH--hemoprotein reductase] + O2 = 20-hydroxy-8,9-epoxy-(5Z,11Z,14Z)-eicosatrienoate + oxidized [NADPH--hemoprotein reductase] + H2O + H(+). Its function is as follows. A cytochrome P450 monooxygenase involved in the metabolism of fatty acids. Catalyzes predominantly the oxidation of the terminal carbon (omega-oxidation) of long-chain fatty acids. Acts as a major omega-hydroxylase for dodecanoic (lauric) acid in liver. In kidney, may play an important role in omega-hydroxylation of (5Z,8Z,11Z,14Z)-eicosatetraenoic acid (arachidonate) to 20-hydroxyeicosatetraenoic acid (20-HETE), a signaling molecule acting both as vasoconstrictive and natriuretic with overall effect on arterial blood pressure. Also participates in the formation of anti-inflammatory hydroxyepoxyeicosatrienoic acids (HEETs) in kidney by converting 8,9-epoxyeicosatrienoic acid (EET) to 20,8,9-HEET, an activator of PPARA. Displays substantially lower fatty acid omega-1 hydroxylase activity. Mechanistically, uses molecular oxygen inserting one oxygen atom into a substrate, and reducing the second into a water molecule, with two electrons provided by NADPH via cytochrome P450 reductase (CPR; NADPH-ferrihemoprotein reductase). The protein is Cytochrome P450 4A10 of Mus musculus (Mouse).